A 644-amino-acid chain; its full sequence is Chaperone protein DnaK (644 aa).

Threonine 199 carries the phosphothreonine; by autocatalysis modification. A disordered region spans residues 605–644; the sequence is KKSSEGQAAQGQTQSQESTKPVEEGVVDAEFEEVKEEDKK. Over residues 609 to 623 the composition is skewed to polar residues; the sequence is EGQAAQGQTQSQEST. Acidic residues predominate over residues 629 to 644; sequence GVVDAEFEEVKEEDKK.

It belongs to the heat shock protein 70 family.

Its function is as follows. Acts as a chaperone. The protein is Chaperone protein DnaK of Legionella pneumophila (strain Paris).